A 326-amino-acid chain; its full sequence is ATP-dependent 6-phosphofructokinase 2 (326 aa).

Residue glycine 14 coordinates ATP. Residue arginine 24–arginine 28 coordinates ADP. ATP is bound by residues arginine 75 to cysteine 76 and glycine 105 to serine 108. Aspartate 106 is a Mg(2+) binding site. Threonine 129–aspartate 131 contacts substrate. Aspartate 131 functions as the Proton acceptor in the catalytic mechanism. Arginine 158 provides a ligand contact to ADP. Substrate is bound by residues arginine 166 and methionine 173–arginine 175. ADP contacts are provided by residues glycine 189 to glutamate 191, lysine 215, and lysine 217 to serine 219. Residues glutamate 226, arginine 250, and histidine 256 to arginine 259 contribute to the substrate site.

Belongs to the phosphofructokinase type A (PFKA) family. ATP-dependent PFK group I subfamily. Prokaryotic clade 'B1' sub-subfamily. Homotetramer. Mg(2+) is required as a cofactor.

It is found in the cytoplasm. It catalyses the reaction beta-D-fructose 6-phosphate + ATP = beta-D-fructose 1,6-bisphosphate + ADP + H(+). The protein operates within carbohydrate degradation; glycolysis; D-glyceraldehyde 3-phosphate and glycerone phosphate from D-glucose: step 3/4. Allosterically activated by ADP and other diphosphonucleosides, and allosterically inhibited by phosphoenolpyruvate. In terms of biological role, catalyzes the phosphorylation of D-fructose 6-phosphate to fructose 1,6-bisphosphate by ATP, the first committing step of glycolysis. The sequence is that of ATP-dependent 6-phosphofructokinase 2 from Bacteroides thetaiotaomicron (strain ATCC 29148 / DSM 2079 / JCM 5827 / CCUG 10774 / NCTC 10582 / VPI-5482 / E50).